Consider the following 124-residue polypeptide: Glycine cleavage system H protein (124 aa).

One can recognise a Lipoyl-binding domain in the interval 19-101 (TGTVGITDYA…AGKGWFLQIK (83 aa)). An N6-lipoyllysine modification is found at lysine 60.

It belongs to the GcvH family. The glycine cleavage system is composed of four proteins: P, T, L and H. Requires (R)-lipoate as cofactor.

Functionally, the glycine cleavage system catalyzes the degradation of glycine. The H protein shuttles the methylamine group of glycine from the P protein to the T protein. This Beijerinckia indica subsp. indica (strain ATCC 9039 / DSM 1715 / NCIMB 8712) protein is Glycine cleavage system H protein.